The sequence spans 355 residues: UDP-N-acetylglucosamine--N-acetylmuramyl-(pentapeptide) pyrophosphoryl-undecaprenol N-acetylglucosamine transferase (355 aa).

UDP-N-acetyl-alpha-D-glucosamine-binding positions include 13 to 15, Asn-125, Arg-162, Ser-190, Ile-244, and Gln-289; that span reads TGG.

The protein belongs to the glycosyltransferase 28 family. MurG subfamily.

Its subcellular location is the cell inner membrane. The catalysed reaction is di-trans,octa-cis-undecaprenyl diphospho-N-acetyl-alpha-D-muramoyl-L-alanyl-D-glutamyl-meso-2,6-diaminopimeloyl-D-alanyl-D-alanine + UDP-N-acetyl-alpha-D-glucosamine = di-trans,octa-cis-undecaprenyl diphospho-[N-acetyl-alpha-D-glucosaminyl-(1-&gt;4)]-N-acetyl-alpha-D-muramoyl-L-alanyl-D-glutamyl-meso-2,6-diaminopimeloyl-D-alanyl-D-alanine + UDP + H(+). It functions in the pathway cell wall biogenesis; peptidoglycan biosynthesis. Its function is as follows. Cell wall formation. Catalyzes the transfer of a GlcNAc subunit on undecaprenyl-pyrophosphoryl-MurNAc-pentapeptide (lipid intermediate I) to form undecaprenyl-pyrophosphoryl-MurNAc-(pentapeptide)GlcNAc (lipid intermediate II). This is UDP-N-acetylglucosamine--N-acetylmuramyl-(pentapeptide) pyrophosphoryl-undecaprenol N-acetylglucosamine transferase from Neisseria meningitidis serogroup A / serotype 4A (strain DSM 15465 / Z2491).